A 366-amino-acid polypeptide reads, in one-letter code: MKKRKLILEDGTVFNGTAFGSDAESSGEIVFNTGMTGYQEVITDPSYCGQFVTLTYPLIGNYGINRDDFETVTPFIHGLVVKEYSEFPSNFRNEETLDEFLQAHNIPGIANIDTRKLTRIIRKHGTMRAVMVDEQKNEQHVIEQLRLAEMPRDQVKRTSTIKPYVVPGRGLRVVMVDFGAKHGILRELTRRDCHITVVPHNYSAEAILRLKPDGIMLTNGPGDPKDVPEAIEMIKQLLGQIPIFGICLGHQLLALACGADTEKMKFGHRGANHPVKDLLAGKTYLTSQNHSYAVNVSSLVNTDLELTQIALNDDTVEGIRHTAFPAFSVQYHPEASPGPEDTNFLFDEFLNLIKASKVKQGGEVYA.

Residues 1-171 (MKKRKLILED…KPYVVPGRGL (171 aa)) are CPSase. 3 residues coordinate L-glutamine: Ser-46, Gly-220, and Gly-222. Residues 172-359 (RVVMVDFGAK…LNLIKASKVK (188 aa)) form the Glutamine amidotransferase type-1 domain. The active-site Nucleophile is Cys-247. 4 residues coordinate L-glutamine: Leu-248, Gln-251, Asn-289, and Tyr-292. Active-site residues include His-332 and Glu-334.

This sequence belongs to the CarA family. Composed of two chains; the small (or glutamine) chain promotes the hydrolysis of glutamine to ammonia, which is used by the large (or ammonia) chain to synthesize carbamoyl phosphate. Tetramer of heterodimers (alpha,beta)4.

It catalyses the reaction hydrogencarbonate + L-glutamine + 2 ATP + H2O = carbamoyl phosphate + L-glutamate + 2 ADP + phosphate + 2 H(+). The enzyme catalyses L-glutamine + H2O = L-glutamate + NH4(+). The protein operates within amino-acid biosynthesis; L-arginine biosynthesis; carbamoyl phosphate from bicarbonate: step 1/1. It participates in pyrimidine metabolism; UMP biosynthesis via de novo pathway; (S)-dihydroorotate from bicarbonate: step 1/3. Small subunit of the glutamine-dependent carbamoyl phosphate synthetase (CPSase). CPSase catalyzes the formation of carbamoyl phosphate from the ammonia moiety of glutamine, carbonate, and phosphate donated by ATP, constituting the first step of 2 biosynthetic pathways, one leading to arginine and/or urea and the other to pyrimidine nucleotides. The small subunit (glutamine amidotransferase) binds and cleaves glutamine to supply the large subunit with the substrate ammonia. This Oceanobacillus iheyensis (strain DSM 14371 / CIP 107618 / JCM 11309 / KCTC 3954 / HTE831) protein is Carbamoyl phosphate synthase small chain.